The chain runs to 128 residues: Fatty acid binding protein 1-B.1 (128 aa).

The protein belongs to the calycin superfamily. Fatty-acid binding protein (FABP) family. As to expression, expressed in the yolk syncytial layer (YSL) and subsequently in the intestinal bulb in developing embryos and larvae. In adults, expressed in the intestine.

It is found in the cytoplasm. Its function is as follows. Binds free fatty acids and their coenzyme A derivatives, bilirubin, and some other small molecules in the cytoplasm. May be involved in intracellular lipid transport. In Danio rerio (Zebrafish), this protein is Fatty acid binding protein 1-B.1 (fabp1b.1).